A 94-amino-acid chain; its full sequence is Small ribosomal subunit protein uS19 (94 aa).

Belongs to the universal ribosomal protein uS19 family.

Its function is as follows. Protein S19 forms a complex with S13 that binds strongly to the 16S ribosomal RNA. This is Small ribosomal subunit protein uS19 from Acetivibrio thermocellus (strain ATCC 27405 / DSM 1237 / JCM 9322 / NBRC 103400 / NCIMB 10682 / NRRL B-4536 / VPI 7372) (Clostridium thermocellum).